Here is a 479-residue protein sequence, read N- to C-terminus: Aspartyl/glutamyl-tRNA(Asn/Gln) amidotransferase subunit B (479 aa).

Belongs to the GatB/GatE family. GatB subfamily. In terms of assembly, heterotrimer of A, B and C subunits.

It carries out the reaction L-glutamyl-tRNA(Gln) + L-glutamine + ATP + H2O = L-glutaminyl-tRNA(Gln) + L-glutamate + ADP + phosphate + H(+). It catalyses the reaction L-aspartyl-tRNA(Asn) + L-glutamine + ATP + H2O = L-asparaginyl-tRNA(Asn) + L-glutamate + ADP + phosphate + 2 H(+). Allows the formation of correctly charged Asn-tRNA(Asn) or Gln-tRNA(Gln) through the transamidation of misacylated Asp-tRNA(Asn) or Glu-tRNA(Gln) in organisms which lack either or both of asparaginyl-tRNA or glutaminyl-tRNA synthetases. The reaction takes place in the presence of glutamine and ATP through an activated phospho-Asp-tRNA(Asn) or phospho-Glu-tRNA(Gln). This Streptococcus equi subsp. zooepidemicus (strain MGCS10565) protein is Aspartyl/glutamyl-tRNA(Asn/Gln) amidotransferase subunit B.